Here is a 326-residue protein sequence, read N- to C-terminus: MERLNNMGKNSIKKVTVVGTGVIGNGWISRFLSQGYDVVATDPAKNAEVRMRQSIENAWPALEKQGLAEGASKDRLTFELDLAKAVADADLIQENVPEREALKRRVLAEIDHFSKSEAIIASSTSGLKPSILQEDCQRPERVIVAHPFNPVYLIPLVEVIGGKDTSPETINISEQFYQSIKMKPLVISTEVEGHIADRLMEAIWREALHLINDGVATTEEVDAAIIYGPGLRWALMGPFLTLHLAGGEQGMRYMLEQFGPALKLPWTKLVAPELTNELANRVVEGCEAQTTGYSIKKLEQRRDEFLIELIQLLEKYWPGANLKGKL.

19-24 (GTGVIG) contacts NAD(+).

This sequence belongs to the 3-hydroxyacyl-CoA dehydrogenase family. L-carnitine dehydrogenase subfamily. As to quaternary structure, homodimer.

It is found in the cytoplasm. The enzyme catalyses carnitine + NAD(+) = 3-dehydrocarnitine + NADH + H(+). It participates in amine and polyamine metabolism; carnitine metabolism. Functionally, catalyzes the NAD(+)-dependent oxidation of L-carnitine to 3-dehydrocarnitine. This Bacillus cereus (strain ZK / E33L) protein is L-carnitine dehydrogenase.